The sequence spans 265 residues: Uronate dehydrogenase (265 aa).

Residues 12 to 13, 32 to 34, 49 to 50, and 69 to 73 each bind NAD(+); these read QL, DLS, DL, and LGGIS. Substrate contacts are provided by residues Ser-73 and 109–111; that span reads SNH. Tyr-134 acts as the Proton acceptor in catalysis. Lys-138 lines the NAD(+) pocket. Residue Ser-163 participates in substrate binding. Cys-164 contributes to the NAD(+) binding site. Arg-172 contacts substrate.

The protein belongs to the NAD(P)-dependent epimerase/dehydratase family. As to quaternary structure, homohexamer.

It carries out the reaction beta-D-galacturonate + NAD(+) = D-galactaro-1,5-lactone + NADH + H(+). The enzyme catalyses beta-D-glucuronate + NAD(+) = D-glucaro-1,5-lactone + NADH + H(+). It functions in the pathway carbohydrate acid metabolism; D-galacturonate degradation via prokaryotic oxidative pathway. Catalyzes the oxidation of D-galacturonate and D-glucuronate to galactarate and D-glucarate, respectively. In fact, in water solution the substrate D-galacturonate is predominantly in pyranosic form whose beta anomer is converted by the enzyme to D-galactaro-1,5-lactone; in solution, this reaction product rearranges to the more stable D-galactaro-1,4-lactone. Makes part of the oxidative degradation pathway of D-galacturonate, which allows A.tumefaciens to utilize D-galacturonate as a sole carbon source. Cannot use NADP(+) instead of NAD(+) as cosubstrate. Is not active on D-galactose, D-glucose, D-galactonate and D-gluconate. The sequence is that of Uronate dehydrogenase (udh) from Agrobacterium fabrum (strain C58 / ATCC 33970) (Agrobacterium tumefaciens (strain C58)).